The chain runs to 430 residues: Adenylosuccinate synthetase (430 aa).

GTP-binding positions include 12–18 (GDEGKGK) and 40–42 (GHT). The active-site Proton acceptor is the Asp-13. Positions 13 and 40 each coordinate Mg(2+). Residues 13–16 (DEGK), 38–41 (NAGH), Thr-128, Arg-142, Gln-223, Thr-238, and Arg-302 each bind IMP. The active-site Proton donor is His-41. GTP is bound by residues 330–332 (SID) and 412–414 (SVG).

Belongs to the adenylosuccinate synthetase family. Homodimer. Mg(2+) is required as a cofactor.

The protein resides in the cytoplasm. The enzyme catalyses IMP + L-aspartate + GTP = N(6)-(1,2-dicarboxyethyl)-AMP + GDP + phosphate + 2 H(+). The protein operates within purine metabolism; AMP biosynthesis via de novo pathway; AMP from IMP: step 1/2. Functionally, plays an important role in the de novo pathway of purine nucleotide biosynthesis. Catalyzes the first committed step in the biosynthesis of AMP from IMP. This chain is Adenylosuccinate synthetase, found in Bacillus subtilis (strain 168).